An 85-amino-acid chain; its full sequence is RNA-binding protein KhpA (85 aa).

The region spanning 32–85 is the KH domain; that stretch reads YLEYNLTVNPEDIGRVIGRQGRVASAIRTIVYSVRVSGPKRVRLTIEDGQQKNS.

It belongs to the KhpA RNA-binding protein family. In terms of assembly, forms a complex with KhpB.

It is found in the cytoplasm. Functionally, a probable RNA chaperone. Forms a complex with KhpB which binds to cellular RNA and controls its expression. Plays a role in peptidoglycan (PG) homeostasis and cell length regulation. In terms of biological role, necessary for correct cell elongation. This chain is RNA-binding protein KhpA, found in Lactiplantibacillus plantarum (strain ATCC BAA-793 / NCIMB 8826 / WCFS1) (Lactobacillus plantarum).